Consider the following 1758-residue polypeptide: Condensin-2 complex subunit hcp-6 (1758 aa).

Disordered regions lie at residues 428 to 501, 969 to 1008, 1379 to 1460, and 1500 to 1656; these read DPGA…KAKE, ENGS…KGGM, QKRL…ARLL, and SKQA…LSRG. Residues 438–462 are compositionally biased toward acidic residues; that stretch reads EQNEEEDEEEEGEDEEEEEENEQDD. Residues 463–473 are compositionally biased toward basic and acidic residues; it reads VAVKEEEQSDK. Positions 474–484 are enriched in acidic residues; that stretch reads SDEENDGDNEE. Residues 485–501 show a composition bias toward basic and acidic residues; it reads NVSKKKEEKKKEKKAKE. Residues 969 to 979 show a composition bias toward polar residues; it reads ENGSSDASTVN. The segment covering 999-1008 has biased composition (low complexity); the sequence is SSQKSSKGGM. The stretch at 1326 to 1385 forms a coiled coil; sequence CIEHKNDIDEILQDNRQLKDEMMFELQRVKQRTEEANRILDEYLKRVAEFKKQQKRLSKS. The span at 1414–1423 shows a compositional bias: acidic residues; the sequence is EDQENVEEEV. Composition is skewed to basic and acidic residues over residues 1424–1437 and 1500–1512; these read EMRT…DADV and SKQA…KTIV. Composition is skewed to polar residues over residues 1602-1618 and 1640-1651; these read ISAN…QSTE and VPTSSSGNTEND.

As to quaternary structure, component of the condensin-2 complex.

Its subcellular location is the nucleus. The protein localises to the chromosome. The protein resides in the centromere. Its function is as follows. Chromosomal protein which is recruited to mitotic chromosomes by hcp-3 (CENP-A) and hcp-4 (CENP-C). Involved in chromosome segregation during mitosis, playing a role in chromosome condensation and in maintaining chromosome morphology, rigidity and orientation during mitosis. In Caenorhabditis elegans, this protein is Condensin-2 complex subunit hcp-6.